A 497-amino-acid polypeptide reads, in one-letter code: GTPase-activating protein GYP8 (497 aa).

The 213-residue stretch at 69–281 folds into the Rab-GAP TBC domain; that stretch reads FVNNSLRKDC…QIFDMTISMQ (213 aa).

This Saccharomyces cerevisiae (strain ATCC 204508 / S288c) (Baker's yeast) protein is GTPase-activating protein GYP8 (GYP8).